Reading from the N-terminus, the 704-residue chain is Rabphilin-3A (704 aa).

A compositionally biased stretch (polar residues) spans 1 to 12; it reads MTDTVFSSSSSR. The tract at residues 1-52 is disordered; that stretch reads MTDTVFSSSSSRWMCPSDRPLQSNDKEQLQTGWSVHPSGQPDRQRKQEELTD. The 118-residue stretch at 44–161 folds into the RabBD domain; sequence QRKQEELTDE…KRSGAWFFKG (118 aa). The FYVE-type zinc-finger motif lies at 92–149; the sequence is GDGVNRCILCGEQLGMLGSACVVCEDCKKNVCTKCGVETSNNRPHPVWLCKICIEQRE. 8 residues coordinate Zn(2+): cysteine 98, cysteine 101, cysteine 115, cysteine 118, cysteine 123, cysteine 126, cysteine 141, and cysteine 144. Residues 167 to 398 are disordered; sequence LPQPMPIKKN…EEEANSYDSD (232 aa). The segment covering 205–214 has biased composition (basic and acidic residues); it reads TRGDTEDRRG. Arginine 229 carries the post-translational modification Omega-N-methylarginine. Phosphoserine is present on serine 277. A compositionally biased stretch (low complexity) spans 279 to 290; it reads QASRPAPASMQS. The span at 291–310 shows a compositional bias: pro residues; the sequence is PAPPQPGQPGPPGGSRPSPG. Positions 366–380 are enriched in low complexity; that stretch reads QASAAAPQPVVASAR. The span at 385-398 shows a compositional bias: acidic residues; that stretch reads PEEDEEEANSYDSD. A C2 1 domain is found at 402 to 524; that stretch reads TLGALEFSLL…KPNQRKNFNI (123 aa). The Ca(2+) site is built by methionine 432, aspartate 433, aspartate 439, aspartate 494, glutamate 495, aspartate 496, glutamate 502, glutamate 549, aspartate 591, aspartate 597, aspartate 651, tyrosine 652, aspartate 653, and aspartate 659. A C2 2 domain is found at 560-693; that stretch reads ERGKILVSLM…NKDKKIERWH (134 aa). A phosphoserine mark is found at serine 702 and serine 703.

As to quaternary structure, interacts with RAB3B, RAB3C, RAB3D, RAB8A, RAB27A and RAB27B. Interacts with RAB3A; this interaction recruits RPH3A to synaptic vesicules. Interacts (via C2B domain) with SNAP25. Interacts with deubiquitinating enzyme CAND1; this interaction results in the deubiquitination of RPH3A. Interacts with GRIN2A and DLG4; this ternary complex regulates NMDA receptor composition at postsynaptic membranes. Interacts with SNCA. Ca(2+) is required as a cofactor. Post-translationally, ubiquitinated. Deubiquitinated by CAND1 to prevent its degradation. As to expression, specifically expressed in brain.

It is found in the cytoplasmic vesicle. The protein localises to the secretory vesicle. It localises to the synaptic vesicle membrane. The protein resides in the cell projection. Its subcellular location is the dendritic spine. It is found in the postsynaptic cell membrane. The protein localises to the membrane. Plays an essential role in docking and fusion steps of regulated exocytosis. At the presynaptic level, RPH3A is recruited by RAB3A to the synaptic vesicle membrane in a GTP-dependent manner where it modulates synaptic vesicle trafficking and calcium-triggered neurotransmitter release. In the post-synaptic compartment, forms a ternary complex with GRIN2A and DLG4 and regulates NMDA receptor stability. Also plays a role in the exocytosis of arginine vasopressin hormone. This is Rabphilin-3A (RPH3A) from Bos taurus (Bovine).